The following is a 567-amino-acid chain: Urease subunit alpha (567 aa).

Residues His-134, His-136, and Lys-217 each contribute to the Ni(2+) site. The residue at position 217 (Lys-217) is an N6-carboxylysine. Substrate is bound at residue His-219. Ni(2+) contacts are provided by His-246 and His-272. The active-site Proton donor is the His-320. Residue Asp-360 coordinates Ni(2+).

Belongs to the metallo-dependent hydrolases superfamily. Urease alpha subunit family. In terms of assembly, heterotrimer of UreA (gamma), UreB (beta) and UreC (alpha) subunits. Three heterotrimers associate to form the active enzyme. The cofactor is Ni cation. Carboxylation allows a single lysine to coordinate two nickel ions.

Its subcellular location is the cytoplasm. The catalysed reaction is urea + 2 H2O + H(+) = hydrogencarbonate + 2 NH4(+). It functions in the pathway nitrogen metabolism; urea degradation; CO(2) and NH(3) from urea (urease route): step 1/1. This chain is Urease subunit alpha, found in Pseudomonas putida (strain GB-1).